The primary structure comprises 570 residues: 2-isopropylmalate synthase (570 aa).

The Pyruvate carboxyltransferase domain occupies 31–305 (PIWMSTDLRD…DPELDFSHIN (275 aa)). Residues Asp-40, His-244, His-246, and Asn-280 each coordinate Mg(2+). The regulatory domain stretch occupies residues 437 to 570 (SDGAIGYVSH…RRSSAQATVA (134 aa)).

It belongs to the alpha-IPM synthase/homocitrate synthase family. LeuA type 2 subfamily. Homodimer. The cofactor is Mg(2+).

It is found in the cytoplasm. It carries out the reaction 3-methyl-2-oxobutanoate + acetyl-CoA + H2O = (2S)-2-isopropylmalate + CoA + H(+). Its pathway is amino-acid biosynthesis; L-leucine biosynthesis; L-leucine from 3-methyl-2-oxobutanoate: step 1/4. Catalyzes the condensation of the acetyl group of acetyl-CoA with 3-methyl-2-oxobutanoate (2-ketoisovalerate) to form 3-carboxy-3-hydroxy-4-methylpentanoate (2-isopropylmalate). The protein is 2-isopropylmalate synthase of Ralstonia pickettii (strain 12J).